A 460-amino-acid chain; its full sequence is ATP synthase subunit beta (460 aa).

150-157 contacts ATP; sequence GGAGVGKT.

The protein belongs to the ATPase alpha/beta chains family. In terms of assembly, F-type ATPases have 2 components, CF(1) - the catalytic core - and CF(0) - the membrane proton channel. CF(1) has five subunits: alpha(3), beta(3), gamma(1), delta(1), epsilon(1). CF(0) has three main subunits: a(1), b(2) and c(9-12). The alpha and beta chains form an alternating ring which encloses part of the gamma chain. CF(1) is attached to CF(0) by a central stalk formed by the gamma and epsilon chains, while a peripheral stalk is formed by the delta and b chains.

Its subcellular location is the cell inner membrane. It carries out the reaction ATP + H2O + 4 H(+)(in) = ADP + phosphate + 5 H(+)(out). Produces ATP from ADP in the presence of a proton gradient across the membrane. The catalytic sites are hosted primarily by the beta subunits. The sequence is that of ATP synthase subunit beta from Proteus mirabilis (strain HI4320).